The following is a 552-amino-acid chain: Transcription factor kayak (552 aa).

2 disordered regions span residues 110 to 145 (LAQG…TDST) and 177 to 234 (GAAS…KRRV). Polar residues predominate over residues 111–127 (AQGSDSEDSNASYNDTQ). The span at 135 to 145 (TDTSSAHTDST) shows a compositional bias: low complexity. Residues 177–192 (GAASVGSSNANTSNTP) are compositionally biased toward polar residues. A bZIP domain is found at 212-275 (EQKRAVRRER…NQLEYCLAAH (64 aa)). A basic motif region spans residues 214–233 (KRAVRRERNKQAAARCRKRR). Residues 240–247 (LTEEVEQL) are leucine-zipper. A compositionally biased stretch (low complexity) spans 304 to 325 (AGSSGSGASSHHNHNSNDSSNG). 3 disordered regions span residues 304–346 (AGSS…PLDL), 365–390 (LDGA…TLPP), and 514–552 (GGTG…LVSL). Positions 333–343 (TLNSTGRSNSP) are enriched in polar residues. Serine 342 carries the phosphoserine modification.

The protein belongs to the bZIP family. Fos subfamily. As to quaternary structure, homodimer. Heterodimer with Jra. The kay-Jra heterodimer binds more stably to the AP-1 site than either of the two proteins alone.

The protein localises to the nucleus. In terms of biological role, developmentally regulated transcription factor AP-1 binds and recognizes the enhancer DNA sequence: 5'-TGA[CG]TCA-3'. May play a role in the function or determination of a particular subset of cells in the developing embryo. It is able to carry out its function either independently of or in conjunction with Jra. The sequence is that of Transcription factor kayak from Drosophila yakuba (Fruit fly).